Here is a 431-residue protein sequence, read N- to C-terminus: ETS domain-containing protein Elk-4 (431 aa).

Positions 5-85 (ITLWQFLLQL…NGQKFVYKFV (81 aa)) form a DNA-binding region, ETS. The disordered stretch occupies residues 114 to 139 (SSSSKDVENGGKDKPPQPGAKTSSRN). A compositionally biased stretch (basic and acidic residues) spans 118–128 (KDVENGGKDKP). Residue Lys-167 forms a Glycyl lysine isopeptide (Lys-Gly) (interchain with G-Cter in SUMO2) linkage. Ser-180 is modified (phosphoserine). 3 disordered regions span residues 251 to 282 (TTPPISSIPPLQEPPRTPSPPLSSHPDIDTDI), 294 to 323 (ENLSLEPKDQDSVLLEKDKVNNSSRSKKPK), and 411 to 431 (TLSGLDGPSTPGPFSPDLQKT). The span at 261–273 (LQEPPRTPSPPLS) shows a compositional bias: pro residues. Positions 299–313 (EPKDQDSVLLEKDKV) are enriched in basic and acidic residues.

The protein belongs to the ETS family. As to quaternary structure, interacts with SIRT7.

It localises to the nucleus. Its function is as follows. Involved in both transcriptional activation and repression. Interaction with SIRT7 leads to recruitment and stabilization of SIRT7 at promoters, followed by deacetylation of histone H3 at 'Lys-18' (H3K18Ac) and subsequent transcription repression. Forms a ternary complex with the serum response factor (SRF). Requires DNA-bound SRF for ternary complex formation and makes extensive DNA contacts to the 5'side of SRF, but does not bind DNA autonomously. The protein is ETS domain-containing protein Elk-4 (ELK4) of Homo sapiens (Human).